The sequence spans 476 residues: ATP synthase subunit beta (476 aa).

Residue 154–161 (GGAGVGKT) coordinates ATP.

This sequence belongs to the ATPase alpha/beta chains family. F-type ATPases have 2 components, CF(1) - the catalytic core - and CF(0) - the membrane proton channel. CF(1) has five subunits: alpha(3), beta(3), gamma(1), delta(1), epsilon(1). CF(0) has three main subunits: a(1), b(2) and c(9-12). The alpha and beta chains form an alternating ring which encloses part of the gamma chain. CF(1) is attached to CF(0) by a central stalk formed by the gamma and epsilon chains, while a peripheral stalk is formed by the delta and b chains.

It localises to the cell inner membrane. It carries out the reaction ATP + H2O + 4 H(+)(in) = ADP + phosphate + 5 H(+)(out). Produces ATP from ADP in the presence of a proton gradient across the membrane. The catalytic sites are hosted primarily by the beta subunits. This chain is ATP synthase subunit beta, found in Nitrobacter hamburgensis (strain DSM 10229 / NCIMB 13809 / X14).